Consider the following 102-residue polypeptide: Putative defensin-like protein 298 (102 aa).

The signal sequence occupies residues 1 to 29; the sequence is MSASKATMLILFALFLSDILLVSIPRAEA. Intrachain disulfides connect Cys35-Cys53, Cys41-Cys58, Cys46-Cys60, Cys74-Cys93, Cys80-Cys98, and Cys86-Cys100.

The protein belongs to the DEFL family.

The protein localises to the secreted. This Arabidopsis thaliana (Mouse-ear cress) protein is Putative defensin-like protein 298.